The primary structure comprises 175 residues: CEN-like protein 4 (175 aa).

This sequence belongs to the phosphatidylethanolamine-binding protein family. Expressed in vegetative axillary meristems but not in the main shoot meristem.

The protein localises to the cytoplasm. In terms of biological role, may form complexes with phosphorylated ligands by interfering with kinases and their effectors. The chain is CEN-like protein 4 (CET4) from Nicotiana tabacum (Common tobacco).